Here is a 768-residue protein sequence, read N- to C-terminus: cGMP-dependent protein kinase, isozyme 1 (768 aa).

Residues 1 to 192 (MAAGMLTDRE…NDFLKNIDAS (192 aa)) form a regulatory region. A compositionally biased stretch (low complexity) spans 114 to 127 (PLASTSSASPSGRT). The segment at 114-134 (PLASTSSASPSGRTSADEVRP) is disordered. 3',5'-cyclic GMP-binding positions include 249–252 (GELA), 259–260 (RT), arginine 366, 375–378 (GEQA), 385–386 (RT), and tyrosine 421. Residues 457–717 (LEVVSTLGIG…IQDIKKHKWF (261 aa)) form the Protein kinase domain. ATP contacts are provided by residues 463–471 (LGIGGFGRV) and lysine 488. Aspartate 582 (proton acceptor) is an active-site residue. Residues 718–768 (LGFDWDGLASQLLIPPFVRPIAHPTDVRYFDRFPCDLNEPPDELSGWDADF) form the AGC-kinase C-terminal domain.

The protein belongs to the protein kinase superfamily. AGC Ser/Thr protein kinase family. cGMP subfamily. Homodimer. Mg(2+) is required as a cofactor. Post-translationally, autophosphorylated. In terms of tissue distribution, in embryo stage 13, expression is seen in a few large, irregular cells having the appearance of hemocytes or macrophages. In adults, expression is seen in optic lamina and weakly in testis.

It carries out the reaction L-seryl-[protein] + ATP = O-phospho-L-seryl-[protein] + ADP + H(+). The catalysed reaction is L-threonyl-[protein] + ATP = O-phospho-L-threonyl-[protein] + ADP + H(+). Binding of cGMP results in enzyme activation. The chain is cGMP-dependent protein kinase, isozyme 1 (Pkg21D) from Drosophila melanogaster (Fruit fly).